The chain runs to 466 residues: 3-isopropylmalate dehydratase large subunit (466 aa).

C347, C407, and C410 together coordinate [4Fe-4S] cluster.

It belongs to the aconitase/IPM isomerase family. LeuC type 1 subfamily. In terms of assembly, heterodimer of LeuC and LeuD. [4Fe-4S] cluster is required as a cofactor.

It catalyses the reaction (2R,3S)-3-isopropylmalate = (2S)-2-isopropylmalate. Its pathway is amino-acid biosynthesis; L-leucine biosynthesis; L-leucine from 3-methyl-2-oxobutanoate: step 2/4. Its function is as follows. Catalyzes the isomerization between 2-isopropylmalate and 3-isopropylmalate, via the formation of 2-isopropylmaleate. The sequence is that of 3-isopropylmalate dehydratase large subunit from Shewanella piezotolerans (strain WP3 / JCM 13877).